The primary structure comprises 267 residues: uncharacterized protein (267 aa).

This is an uncharacterized protein from Saccharomyces cerevisiae (strain ATCC 204508 / S288c) (Baker's yeast).